The primary structure comprises 178 residues: Large ribosomal subunit protein uL6 (178 aa).

This sequence belongs to the universal ribosomal protein uL6 family. As to quaternary structure, part of the 50S ribosomal subunit.

Its function is as follows. This protein binds to the 23S rRNA, and is important in its secondary structure. It is located near the subunit interface in the base of the L7/L12 stalk, and near the tRNA binding site of the peptidyltransferase center. The polypeptide is Large ribosomal subunit protein uL6 (Streptococcus pyogenes serotype M3 (strain ATCC BAA-595 / MGAS315)).